The chain runs to 503 residues: MQNFKELGISDKTVETLEAMGFKEPTPIQKDSIPYTLEGKDILGQAQTGTGKTGAFGIPLIEKVVGQSGVQALILAPTRELAMQVAEQLREFSRGQNVQVVTVFGGMPIDRQIKALKRGPQIVVGTPGRVIDHLNRRTLKTNGIHTLILDEADEMMNMGFIDDMRFIMDKIPAEQRQTMLFSATMPKAIQTLVQQFMKSPQIVKTMNNEMSDPQIDEYYTIVKELEKFDTFTNFLDVHQPELAIVFGRTKRRVDELTSALLSKGYKAEGLHGDITQAKRLEVLKKFKNDQIDILVATDVAARGLDISGVSHVYNFDIPQDTESYTHRIGRTGRAGKEGIAVTFVNPIEMDYIRQIEDSNGRRMNALRPPHRKEVLKAREDDIKDKVKNWMSRESEARLKRISSELLEEYDSTELVASLLQELVEANDEVEVQLTFEKPLARKNRQGKGNGSRRGGKRNNKFDNKNKRSKGNFNKKKGKKTDRRERQDKGRSTMKGRTFADLQK.

A Q motif motif is present at residues 2–30; it reads QNFKELGISDKTVETLEAMGFKEPTPIQK. A Helicase ATP-binding domain is found at 33–203; it reads IPYTLEGKDI…QQFMKSPQIV (171 aa). 46 to 53 serves as a coordination point for ATP; the sequence is AQTGTGKT. The DEAD box signature appears at 150–153; sequence DEAD. A Helicase C-terminal domain is found at 214 to 375; sequence QIDEYYTIVK…LRPPHRKEVL (162 aa). The disordered stretch occupies residues 436 to 503; sequence EKPLARKNRQ…KGRTFADLQK (68 aa). The segment covering 466 to 480 has biased composition (basic residues); sequence KRSKGNFNKKKGKKT. The span at 481–490 shows a compositional bias: basic and acidic residues; the sequence is DRRERQDKGR.

It belongs to the DEAD box helicase family. CshA subfamily. As to quaternary structure, oligomerizes, may be a member of the RNA degradosome.

It is found in the cytoplasm. It carries out the reaction ATP + H2O = ADP + phosphate + H(+). Its function is as follows. DEAD-box RNA helicase possibly involved in RNA degradation. Unwinds dsRNA in both 5'- and 3'-directions, has RNA-dependent ATPase activity. This Staphylococcus haemolyticus (strain JCSC1435) protein is DEAD-box ATP-dependent RNA helicase CshA.